Here is a 299-residue protein sequence, read N- to C-terminus: Zinc-alpha-2-glycoprotein (299 aa).

The N-terminal stretch at 1 to 17 (MVPVLLALLLLLGPAVS) is a signal peptide. N-linked (GlcNAc...) asparagine glycans are attached at residues Asn-24, Asn-125, and Asn-256. 2 disulfide bridges follow: Cys-120/Cys-183 and Cys-222/Cys-277. The Ig-like C1-type domain occupies 204 to 289 (PSVSVTGHAA…EHRSLTRPLT (86 aa)).

Belongs to the MHC class I family. In terms of assembly, interacts with PIP.

It is found in the secreted. Its function is as follows. Stimulates lipid degradation in adipocytes and causes the extensive fat losses associated with some advanced cancers. This Bos taurus (Bovine) protein is Zinc-alpha-2-glycoprotein (AZGP1).